Reading from the N-terminus, the 750-residue chain is Photosystem I P700 chlorophyll a apoprotein A1 (750 aa).

8 consecutive transmembrane segments (helical) span residues 70-93, 156-179, 195-219, 291-309, 346-369, 385-411, 433-455, and 531-549; these read VFSA…FHGA, LYCT…FHYH, LNHH…HVSL, IAHH…GHMY, WHAQ…HHMY, LSLF…IFMV, AIIS…LYIH, and FLVH…LILL. [4Fe-4S] cluster-binding residues include Cys-573 and Cys-582. A run of 2 helical transmembrane segments spans residues 589–610 and 664–686; these read HVFL…HFSW and LSAY…MFLF. His-675 is a binding site for chlorophyll a'. 2 residues coordinate chlorophyll a: Met-683 and Tyr-691. Residue Trp-692 coordinates phylloquinone. The helical transmembrane segment at 724 to 744 threads the bilayer; sequence AVGVTHYLLGGIATTWAFFLA.

The protein belongs to the PsaA/PsaB family. In terms of assembly, the PsaA/B heterodimer binds the P700 chlorophyll special pair and subsequent electron acceptors. PSI consists of a core antenna complex that captures photons, and an electron transfer chain that converts photonic excitation into a charge separation. The eukaryotic PSI reaction center is composed of at least 11 subunits. P700 is a chlorophyll a/chlorophyll a' dimer, A0 is one or more chlorophyll a, A1 is one or both phylloquinones and FX is a shared 4Fe-4S iron-sulfur center. serves as cofactor.

It localises to the plastid. The protein resides in the chloroplast thylakoid membrane. The catalysed reaction is reduced [plastocyanin] + hnu + oxidized [2Fe-2S]-[ferredoxin] = oxidized [plastocyanin] + reduced [2Fe-2S]-[ferredoxin]. PsaA and PsaB bind P700, the primary electron donor of photosystem I (PSI), as well as the electron acceptors A0, A1 and FX. PSI is a plastocyanin-ferredoxin oxidoreductase, converting photonic excitation into a charge separation, which transfers an electron from the donor P700 chlorophyll pair to the spectroscopically characterized acceptors A0, A1, FX, FA and FB in turn. Oxidized P700 is reduced on the lumenal side of the thylakoid membrane by plastocyanin. The sequence is that of Photosystem I P700 chlorophyll a apoprotein A1 from Amborella trichopoda.